A 240-amino-acid chain; its full sequence is ATP-dependent dethiobiotin synthetase BioD (240 aa).

15–20 (EIGKTF) lines the ATP pocket. T19 is a Mg(2+) binding site. Residue K40 is part of the active site. ATP is bound by residues D57, 118–121 (EGVG), and 178–179 (NR). The Mg(2+) site is built by D57 and E118.

Belongs to the dethiobiotin synthetase family. Homodimer. The cofactor is Mg(2+).

The protein resides in the cytoplasm. The catalysed reaction is (7R,8S)-7,8-diammoniononanoate + CO2 + ATP = (4R,5S)-dethiobiotin + ADP + phosphate + 3 H(+). The protein operates within cofactor biosynthesis; biotin biosynthesis; biotin from 7,8-diaminononanoate: step 1/2. Its function is as follows. Catalyzes a mechanistically unusual reaction, the ATP-dependent insertion of CO2 between the N7 and N8 nitrogen atoms of 7,8-diaminopelargonic acid (DAPA, also called 7,8-diammoniononanoate) to form a ureido ring. This Burkholderia pseudomallei (strain 1106a) protein is ATP-dependent dethiobiotin synthetase BioD.